We begin with the raw amino-acid sequence, 105 residues long: Phosphoribosyl-AMP cyclohydrolase (105 aa).

Mg(2+) is bound at residue Asp72. Cys73 is a binding site for Zn(2+). Asp74 and Asp76 together coordinate Mg(2+). Positions 89 and 96 each coordinate Zn(2+).

Belongs to the PRA-CH family. In terms of assembly, homodimer. It depends on Mg(2+) as a cofactor. Zn(2+) serves as cofactor.

The protein resides in the cytoplasm. The enzyme catalyses 1-(5-phospho-beta-D-ribosyl)-5'-AMP + H2O = 1-(5-phospho-beta-D-ribosyl)-5-[(5-phospho-beta-D-ribosylamino)methylideneamino]imidazole-4-carboxamide. The protein operates within amino-acid biosynthesis; L-histidine biosynthesis; L-histidine from 5-phospho-alpha-D-ribose 1-diphosphate: step 3/9. Its function is as follows. Catalyzes the hydrolysis of the adenine ring of phosphoribosyl-AMP. The sequence is that of Phosphoribosyl-AMP cyclohydrolase from Listeria monocytogenes serotype 4b (strain CLIP80459).